The chain runs to 251 residues: MSVSPVAIVSTPVAVSASPAGSPAQHDAPLTVRWRGTEAYQTSFDAMRAFTDARTAETPDEIWIVEHPPVYTLGQAGDPAHLLVADSGVPLVKVDRGGQITYHGPGQIVAYLLLDLRRRKLMVRTLVTRIEEAVIETLAAYNLASVRKAGAPGIYVASGVHGGAKIAALGLKIRNGCSYHGLSLNVKMDLRPFLAINPCGYAGLETVDMASLEVAADWNDVARTLVGRLIANLDGASAAADKPHALEHSND.

Residues 56-241 (AETPDEIWIV…NLDGASAAAD (186 aa)) form the BPL/LPL catalytic domain. Residues 96 to 103 (RGGQITYH), 168 to 170 (ALG), and 181 to 183 (GLS) each bind substrate. Residue C199 is the Acyl-thioester intermediate of the active site.

The protein belongs to the LipB family.

The protein localises to the cytoplasm. The catalysed reaction is octanoyl-[ACP] + L-lysyl-[protein] = N(6)-octanoyl-L-lysyl-[protein] + holo-[ACP] + H(+). It participates in protein modification; protein lipoylation via endogenous pathway; protein N(6)-(lipoyl)lysine from octanoyl-[acyl-carrier-protein]: step 1/2. Functionally, catalyzes the transfer of endogenously produced octanoic acid from octanoyl-acyl-carrier-protein onto the lipoyl domains of lipoate-dependent enzymes. Lipoyl-ACP can also act as a substrate although octanoyl-ACP is likely to be the physiological substrate. This chain is Octanoyltransferase, found in Burkholderia vietnamiensis (strain G4 / LMG 22486) (Burkholderia cepacia (strain R1808)).